We begin with the raw amino-acid sequence, 252 residues long: Adenosylcobinamide-GDP ribazoletransferase (252 aa).

The next 7 helical transmembrane spans lie at 4–24 (LFKG…PYVE), 38–58 (PIIG…INYL), 60–80 (ISIV…TGML), 113–133 (FSVI…HSFL), 141–161 (ILMF…ITII), 190–210 (LVCI…LLIV), and 232–252 (VAGF…CLFT).

It belongs to the CobS family. Mg(2+) is required as a cofactor.

It is found in the cell membrane. It carries out the reaction alpha-ribazole + adenosylcob(III)inamide-GDP = adenosylcob(III)alamin + GMP + H(+). The catalysed reaction is alpha-ribazole 5'-phosphate + adenosylcob(III)inamide-GDP = adenosylcob(III)alamin 5'-phosphate + GMP + H(+). It participates in cofactor biosynthesis; adenosylcobalamin biosynthesis; adenosylcobalamin from cob(II)yrinate a,c-diamide: step 7/7. In terms of biological role, joins adenosylcobinamide-GDP and alpha-ribazole to generate adenosylcobalamin (Ado-cobalamin). Also synthesizes adenosylcobalamin 5'-phosphate from adenosylcobinamide-GDP and alpha-ribazole 5'-phosphate. The polypeptide is Adenosylcobinamide-GDP ribazoletransferase (Clostridium botulinum (strain Alaska E43 / Type E3)).